The chain runs to 73 residues: Putative membrane protein insertion efficiency factor (73 aa).

It belongs to the UPF0161 family.

The protein resides in the cell inner membrane. Functionally, could be involved in insertion of integral membrane proteins into the membrane. This Neisseria meningitidis serogroup C (strain 053442) protein is Putative membrane protein insertion efficiency factor.